The chain runs to 125 residues: Short coiled-coil protein (125 aa).

Residues 1-31 (MSKMDGLSTGEEEDSTFTSISLEDDTDHSLK) are disordered. Residues 43 to 101 (KMMNADMDAVDAENQVELEEKTRLINQVLELQHTLEDLSARVDAVKEENLKLKSENQVL) are a coiled coil.

The protein belongs to the SCOC family. As to quaternary structure, homodimer. Interacts with ARL1, ARL2 and ARL3. Directly interacts with FEZ1 and UVRAG. The interaction with UVRAG is reduced by amino acid starvation, but the complex is stabilized in the presence of FEZ1. Interacts with NRBF2.

The protein localises to the golgi apparatus membrane. It is found in the golgi apparatus. The protein resides in the trans-Golgi network. Its subcellular location is the cytoplasm. It localises to the cytosol. In terms of biological role, positive regulator of amino acid starvation-induced autophagy. This Mus musculus (Mouse) protein is Short coiled-coil protein (Scoc).